The sequence spans 309 residues: Ribosomal RNA large subunit methyltransferase F (309 aa).

Residues 1–21 form a disordered region; it reads MASQHDKKSVQSGLLHPRNPH.

Belongs to the methyltransferase superfamily. METTL16/RlmF family.

It is found in the cytoplasm. It catalyses the reaction adenosine(1618) in 23S rRNA + S-adenosyl-L-methionine = N(6)-methyladenosine(1618) in 23S rRNA + S-adenosyl-L-homocysteine + H(+). Functionally, specifically methylates the adenine in position 1618 of 23S rRNA. This Desulfotalea psychrophila (strain LSv54 / DSM 12343) protein is Ribosomal RNA large subunit methyltransferase F.